The following is a 202-amino-acid chain: Securin (202 aa).

The tract at residues 1-92 is disordered; it reads MATLIYVDKE…QKQPSFSAKK (92 aa). Ala-2 carries the N-acetylalanine modification. Positions 61-64 match the D-box motif; sequence RKAL. Short sequence motifs (TEK-box) lie at residues 71 to 73 and 94 to 96; these read TEK. The short motif at 163-173 is the SH3-binding element; it reads XPSPVKMPSPP. A Phosphoserine; by CDK1 modification is found at Ser-165.

This sequence belongs to the securin family. Interacts with RPS10 and DNAJA1. Interacts with the caspase-like ESPL1, and prevents its protease activity probably by covering its active site. Interacts with TP53 and blocks its activity probably by blocking its binding to DNA. Interacts with the Ku 70 kDa subunit of ds-DNA kinase. Interacts with PTTG1IP. In terms of processing, phosphorylated at Ser-165 by CDK1 during mitosis. Phosphorylated in vitro by ds-DNA kinase. Post-translationally, ubiquitinated through 'Lys-11' linkage of ubiquitin moieties by the anaphase promoting complex (APC) at the onset of anaphase, conducting to its degradation. 'Lys-11'-linked ubiquitination is mediated by the E2 ligase UBE2C/UBCH10.

The protein resides in the cytoplasm. It localises to the nucleus. Regulatory protein, which plays a central role in chromosome stability, in the p53/TP53 pathway, and DNA repair. Probably acts by blocking the action of key proteins. During the mitosis, it blocks Separase/ESPL1 function, preventing the proteolysis of the cohesin complex and the subsequent segregation of the chromosomes. At the onset of anaphase, it is ubiquitinated, conducting to its destruction and to the liberation of ESPL1. Its function is however not limited to a blocking activity, since it is required to activate ESPL1. Negatively regulates the transcriptional activity and related apoptosis activity of TP53. The negative regulation of TP53 may explain the strong transforming capability of the protein when it is overexpressed. May also play a role in DNA repair via its interaction with Ku, possibly by connecting DNA damage-response pathways with sister chromatid separation. In Pan troglodytes (Chimpanzee), this protein is Securin (PTTG1).